The following is a 310-amino-acid chain: 4-hydroxyproline 2-epimerase (310 aa).

The Proton acceptor role is filled by C88. Substrate is bound by residues 89–90, H208, and D232; that span reads GH. Catalysis depends on C236, which acts as the Proton donor. A substrate-binding site is contributed by 237-238; that stretch reads GT.

It belongs to the proline racemase family.

The catalysed reaction is trans-4-hydroxy-L-proline = cis-4-hydroxy-D-proline. Its function is as follows. Catalyzes the epimerization of trans-4-hydroxy-L-proline (t4LHyp) to cis-4-hydroxy-D-proline (c4DHyp). Is likely involved in a degradation pathway that converts t4LHyp to alpha-ketoglutarate. Can also catalyze the dehydration of trans-3-hydroxy-L-proline (t3LHyp) to Delta(1)-pyrroline-2-carboxylate (Pyr2C), albeit with 42-fold lower efficiency. Displays no proline racemase activity. In Burkholderia thailandensis (strain ATCC 700388 / DSM 13276 / CCUG 48851 / CIP 106301 / E264), this protein is 4-hydroxyproline 2-epimerase.